The following is a 213-amino-acid chain: Kynurenine formamidase (213 aa).

Tryptophan 15 contacts substrate. Residues histidine 45, histidine 49, and aspartate 51 each contribute to the Zn(2+) site. The active-site Proton donor/acceptor is histidine 55. Zn(2+)-binding residues include histidine 157 and glutamate 169.

This sequence belongs to the Cyclase 1 superfamily. KynB family. As to quaternary structure, homodimer. The cofactor is Zn(2+).

It carries out the reaction N-formyl-L-kynurenine + H2O = L-kynurenine + formate + H(+). It functions in the pathway amino-acid degradation; L-tryptophan degradation via kynurenine pathway; L-kynurenine from L-tryptophan: step 2/2. In terms of biological role, catalyzes the hydrolysis of N-formyl-L-kynurenine to L-kynurenine, the second step in the kynurenine pathway of tryptophan degradation. The sequence is that of Kynurenine formamidase from Deinococcus geothermalis (strain DSM 11300 / CIP 105573 / AG-3a).